The chain runs to 229 residues: Thiamine import ATP-binding protein ThiQ (229 aa).

Positions 2–229 (LHLENIRVRQ…NNAEPLRPWM (228 aa)) constitute an ABC transporter domain. ATP is bound at residue 32-39 (GASGSGKS).

Belongs to the ABC transporter superfamily. Thiamine importer (TC 3.A.1.19.1) family. In terms of assembly, the complex is composed of two ATP-binding proteins (ThiQ), two transmembrane proteins (ThiP) and a solute-binding protein (ThiB).

It is found in the cell inner membrane. The catalysed reaction is thiamine(out) + ATP + H2O = thiamine(in) + ADP + phosphate + H(+). Part of the ABC transporter complex ThiBPQ involved in thiamine import. Responsible for energy coupling to the transport system. In Jannaschia sp. (strain CCS1), this protein is Thiamine import ATP-binding protein ThiQ.